A 466-amino-acid chain; its full sequence is Soluble pyridine nucleotide transhydrogenase (466 aa).

36-45 is an FAD binding site; the sequence is ERYHNVGGGC.

The protein belongs to the class-I pyridine nucleotide-disulfide oxidoreductase family. The cofactor is FAD.

The protein resides in the cytoplasm. It carries out the reaction NAD(+) + NADPH = NADH + NADP(+). Its function is as follows. Conversion of NADPH, generated by peripheral catabolic pathways, to NADH, which can enter the respiratory chain for energy generation. The sequence is that of Soluble pyridine nucleotide transhydrogenase from Salmonella gallinarum (strain 287/91 / NCTC 13346).